The following is a 296-amino-acid chain: tRNA dimethylallyltransferase (296 aa).

Residue 11–18 participates in ATP binding; sequence GPTAVGKT. A substrate-binding site is contributed by 13 to 18; that stretch reads TAVGKT. Positions 36–39 are interaction with substrate tRNA; sequence DSQQ.

The protein belongs to the IPP transferase family. As to quaternary structure, monomer. The cofactor is Mg(2+).

It catalyses the reaction adenosine(37) in tRNA + dimethylallyl diphosphate = N(6)-dimethylallyladenosine(37) in tRNA + diphosphate. Its function is as follows. Catalyzes the transfer of a dimethylallyl group onto the adenine at position 37 in tRNAs that read codons beginning with uridine, leading to the formation of N6-(dimethylallyl)adenosine (i(6)A). In Streptococcus agalactiae serotype Ia (strain ATCC 27591 / A909 / CDC SS700), this protein is tRNA dimethylallyltransferase.